The primary structure comprises 280 residues: Undecaprenyl-diphosphatase (280 aa).

Transmembrane regions (helical) follow at residues 19-39 (FLPVSSTGHLFLFSSFFPFSG), 44-64 (FDDLFDIFIQSGAILSVLFLY), 89-109 (FYFLVQIVIGAFPILVVGFIA), 125-145 (ILASAWIFGGVLILIAEWFFQ), 156-176 (VGFRDAILIGIFQCVALIPGV), 197-217 (AEFSFFLAVPVLLAAGIYKLI), 226-246 (VTIPILAFGFLISFLLCTLVI), and 259-279 (GVFGIYRILLGVGVLVFTKFI).

It belongs to the UppP family.

It localises to the cell inner membrane. It catalyses the reaction di-trans,octa-cis-undecaprenyl diphosphate + H2O = di-trans,octa-cis-undecaprenyl phosphate + phosphate + H(+). Functionally, catalyzes the dephosphorylation of undecaprenyl diphosphate (UPP). Confers resistance to bacitracin. This is Undecaprenyl-diphosphatase from Leptospira borgpetersenii serovar Hardjo-bovis (strain L550).